A 526-amino-acid chain; its full sequence is Alpha-1,3-mannosyl-glycoprotein 4-beta-N-acetylglucosaminyltransferase A (526 aa).

The Cytoplasmic portion of the chain corresponds to 1 to 6; it reads MRLRNG. Residues 7 to 27 form a helical; Signal-anchor for type II membrane protein membrane-spanning segment; the sequence is TVATALVFVTSFLTLSWYTTW. Positions 28 to 63 form a coiled coil; sequence QNGKEKLIAYQREFLALKERLRVAEHRISQRSSELN. Topologically, residues 28–526 are lumenal; sequence QNGKEKLIAY…NEIHIKKVTS (499 aa). The N-linked (GlcNAc...) asparagine glycan is linked to asparagine 449. At serine 465 the chain carries Phosphoserine.

This sequence belongs to the glycosyltransferase 54 family. The cofactor is a divalent metal cation. N-glycosylated.

The protein resides in the golgi apparatus membrane. It is found in the secreted. It catalyses the reaction N(4)-{beta-D-GlcNAc-(1-&gt;2)-alpha-D-Man-(1-&gt;3)-[beta-D-GlcNAc-(1-&gt;2)-alpha-D-Man-(1-&gt;6)]-beta-D-Man-(1-&gt;4)-beta-D-GlcNAc-(1-&gt;4)-beta-D-GlcNAc}-L-asparaginyl-[protein] + UDP-N-acetyl-alpha-D-glucosamine = N(4)-{beta-D-GlcNAc-(1-&gt;2)-[beta-D-GlcNAc-(1-&gt;4)]-alpha-D-Man-(1-&gt;3)-[beta-D-GlcNAc-(1-&gt;2)-alpha-D-Man-(1-&gt;6)]-beta-D-Man-(1-&gt;4)-beta-D-GlcNAc-(1-&gt;4)-beta-D-GlcNAc}-L-asparaginyl-[protein] + UDP + H(+). The catalysed reaction is an N(4)-{beta-D-GlcNAc-(1-&gt;2)-alpha-D-Man-(1-&gt;3)-[alpha-D-Man-(1-&gt;6)]-beta-D-Man-(1-&gt;4)-beta-D-GlcNAc-(1-&gt;4)-beta-D-GlcNAc}-L-asparaginyl-[protein] + UDP-N-acetyl-alpha-D-glucosamine = an N(4)-{beta-D-GlcNAc-(1-&gt;2)-[beta-D-GlcNAc-(1-&gt;4)]-alpha-D-Man-(1-&gt;3)-[alpha-D-Man-(1-&gt;6)]-beta-D-Man-(1-&gt;4)-beta-D-GlcNAc-(1-&gt;4)-beta-D-GlcNAc}-L-asparaginyl-[protein] + UDP + H(+). The enzyme catalyses an N(4)-{beta-D-GlcNAc-(1-&gt;2)-alpha-D-Man-(1-&gt;3)-[beta-D-GlcNAc-(1-&gt;2)-[beta-D-GlcNAc-(1-&gt;6)]-alpha-D-Man-(1-&gt;6)]-beta-D-Man-(1-&gt;4)-beta-D-GlcNAc-(1-&gt;4)-beta-D-GlcNAc}-L-asparaginyl-[protein] + UDP-N-acetyl-alpha-D-glucosamine = an N(4)-{beta-D-GlcNAc-(1-&gt;2)-[beta-D-GlcNAc-(1-&gt;4)]-alpha-D-Man-(1-&gt;3)-[beta-D-GlcNAc-(1-&gt;2)-[beta-D-GlcNAc-(1-&gt;6)]-alpha-D-Man-(1-&gt;6)]-beta-D-Man-(1-&gt;4)-beta-D-GlcNAc-(1-&gt;4)-beta-D-GlcNAc}-L-asparaginyl-[protein] + UDP + H(+). It carries out the reaction an N(4)-{beta-D-GlcNAc-(1-&gt;2)-alpha-D-Man-(1-&gt;3)-[beta-D-GlcNAc-(1-&gt;2)-alpha-D-Man-(1-&gt;6)]-beta-D-Man-(1-&gt;4)-beta-D-GlcNAc-(1-&gt;4)-[alpha-L-Fuc-(1-&gt;6)]-beta-D-GlcNAc}-L-asparaginyl-[protein] + UDP-N-acetyl-alpha-D-glucosamine = N(4)-{beta-D-GlcNAc-(1-&gt;2)-[beta-D-GlcNAc-(1-&gt;4)]-alpha-D-Man-(1-&gt;3)-[beta-D-GlcNAc-(1-&gt;2)-alpha-D-Man-(1-&gt;6)]-beta-D-Man-(1-&gt;4)-beta-D-GlcNAc-(1-&gt;4)-[alpha-L-Fuc-(1-&gt;6)]-beta-D-GlcNAc}-asparaginyl-[protein] + UDP + H(+). It catalyses the reaction an N(4)-{beta-D-GlcNAc-(1-&gt;2)-alpha-D-Man-(1-&gt;3)-[beta-D-Gal-(1-&gt;4)-beta-D-GlcNAc-(1-&gt;2)-alpha-D-Man-(1-&gt;6)]-beta-D-Man-(1-&gt;4)-beta-D-GlcNAc-(1-&gt;4)-beta-D-GlcNAc}-L-asparaginyl-[protein] + UDP-N-acetyl-alpha-D-glucosamine = an N(4)-{beta-D-GlcNAc-(1-&gt;2)-[beta-D-GlcNAc-(1-&gt;4)]-alpha-D-Man-(1-&gt;3)-[beta-D-Gal-(1-&gt;4)-beta-D-GlcNAc-(1-&gt;2)-alpha-D-Man-(1-&gt;6)]-beta-D-Man-(1-&gt;4)-beta-D-GlcNAc-(1-&gt;4)-beta-D-GlcNAc}-L-asparaginyl-[protein] + UDP + H(+). The catalysed reaction is N(4)-{beta-D-GlcNAc-(1-&gt;2)-alpha-D-Man-(1-&gt;3)-[alpha-D-Man-(1-&gt;3)-{alpha-D-Man-(1-&gt;6)}-alpha-D-Man-(1-&gt;6)]-beta-D-Man-(1-&gt;4)-beta-D-GlcNAc-(1-&gt;4)-beta-D-GlcNAc}-asparaginyl-[protein] + UDP-N-acetyl-alpha-D-glucosamine = N(4)-{beta-D-GlcNAc-(1-&gt;2)-[beta-D-GlcNAc-(1-&gt;4)]-alpha-D-Man-(1-&gt;3)-[alpha-D-Man-(1-&gt;3)-{alpha-D-Man-(1-&gt;6)}-alpha-D-Man-(1-&gt;6)]-beta-D-Man-(1-&gt;4)-beta-D-GlcNAc-(1-&gt;4)-beta-D-GlcNAc}-asparaginyl-[protein] + UDP + H(+). The enzyme catalyses N(4)-{beta-D-GlcNAc-(1-&gt;2)-alpha-D-Man-(1-&gt;3)-beta-D-Man-(1-&gt;4)-beta-D-GlcNAc-(1-&gt;4)-beta-D-GlcNAc}-asparaginyl-[protein] + UDP-N-acetyl-alpha-D-glucosamine = N(4)-{beta-D-GlcNAc-(1-&gt;2)-[beta-D-GlcNAc-(1-&gt;4)]-alpha-D-Man-(1-&gt;3)-beta-D-Man-(1-&gt;4)-beta-D-GlcNAc-(1-&gt;4)-beta-D-GlcNAc}-asparaginyl-[protein] + UDP + H(+). Its pathway is protein modification; protein glycosylation. Inhibited by UDP. In terms of biological role, glycosyltransferase that catalyze the transfer of GlcNAc from UDP-GlcNAc to the GlcNAcbeta1-2Manalpha1-3 arm of the core structure of N-linked glycans through a beta1-4 linkage and participates in the production of tri- and tetra-antennary N-linked sugar chains. Involved in glucose transport by mediating SLC2A2/GLUT2 glycosylation, thereby controlling cell-surface expression of SLC2A2 in pancreatic beta cells. In Rattus norvegicus (Rat), this protein is Alpha-1,3-mannosyl-glycoprotein 4-beta-N-acetylglucosaminyltransferase A.